The following is a 189-amino-acid chain: MTTATETKTMPRLKERYRNEIVGQLREQYQYGNPMQVPGLVKIVVNMGVGEAARDAKLIDGAVRDLATITGQKPQVRRATKSIAQFKLREGMPIGAKVTLRGDRMWEFLDRLLSIALPRIRDFRGLDGRKLDGNGNYTFGLTEQSVFHEIDQDKIDRQRGMDITVVTTATTDDEGRALLKFLGFPFKEN.

The protein belongs to the universal ribosomal protein uL5 family. As to quaternary structure, part of the 50S ribosomal subunit; part of the 5S rRNA/L5/L18/L25 subcomplex. Contacts the 5S rRNA and the P site tRNA. Forms a bridge to the 30S subunit in the 70S ribosome.

In terms of biological role, this is one of the proteins that bind and probably mediate the attachment of the 5S RNA into the large ribosomal subunit, where it forms part of the central protuberance. In the 70S ribosome it contacts protein S13 of the 30S subunit (bridge B1b), connecting the 2 subunits; this bridge is implicated in subunit movement. Contacts the P site tRNA; the 5S rRNA and some of its associated proteins might help stabilize positioning of ribosome-bound tRNAs. This is Large ribosomal subunit protein uL5 from Salinispora tropica (strain ATCC BAA-916 / DSM 44818 / JCM 13857 / NBRC 105044 / CNB-440).